The following is a 228-amino-acid chain: Translation initiation factor 6 (228 aa).

In terms of biological role, binds to the 50S ribosomal subunit and prevents its association with the 30S ribosomal subunit to form the 70S initiation complex. The chain is Translation initiation factor 6 from Methanocaldococcus jannaschii (strain ATCC 43067 / DSM 2661 / JAL-1 / JCM 10045 / NBRC 100440) (Methanococcus jannaschii).